Reading from the N-terminus, the 98-residue chain is Co-chaperonin GroES (98 aa).

The protein belongs to the GroES chaperonin family. Heptamer of 7 subunits arranged in a ring. Interacts with the chaperonin GroEL.

It localises to the cytoplasm. Together with the chaperonin GroEL, plays an essential role in assisting protein folding. The GroEL-GroES system forms a nano-cage that allows encapsulation of the non-native substrate proteins and provides a physical environment optimized to promote and accelerate protein folding. GroES binds to the apical surface of the GroEL ring, thereby capping the opening of the GroEL channel. In Kineococcus radiotolerans (strain ATCC BAA-149 / DSM 14245 / SRS30216), this protein is Co-chaperonin GroES.